Consider the following 334-residue polypeptide: Heat-inducible transcription repressor HrcA (334 aa).

It belongs to the HrcA family.

Its function is as follows. Negative regulator of class I heat shock genes (grpE-dnaK-dnaJ and groELS operons). Prevents heat-shock induction of these operons. This Acidovorax ebreus (strain TPSY) (Diaphorobacter sp. (strain TPSY)) protein is Heat-inducible transcription repressor HrcA.